Here is a 40-residue protein sequence, read N- to C-terminus: Mu-thomitoxin-Hme1b (40 aa).

3 disulfide bridges follow: Cys-2–Cys-18, Cys-9–Cys-22, and Cys-17–Cys-33.

This sequence belongs to the neurotoxin 19 (CSTX) family. Contains 3 disulfide bonds. Expressed by the venom gland.

It is found in the secreted. Functionally, blocks the Nav1.2/SCN2A, Nav1.4/SCN4A, Nav1.5/SCN5A and Nav1.6/SCN8A sodium channels. Shows a slight preference for the Nav1.2 and Nav1.4 channels. Reduces the peak amplitude of the sodium current and negatively shifts the steady-state inactivation process. Does not shift the threshold potential of activation or the voltage corresponding to maximal current. Does not change the reversal potential of the sodium current. May act on site 1 of the receptor. This is Mu-thomitoxin-Hme1b from Heriaeus mellotteei (Crab spider).